The chain runs to 236 residues: Small ribosomal subunit protein uS5 (236 aa).

The S5 DRBM domain maps to 61 to 124 (ENQEILDIAL…NYAKLNIIEI (64 aa)).

It belongs to the universal ribosomal protein uS5 family. Part of the 30S ribosomal subunit. Contacts protein S4.

With S4 and S12 plays an important role in translational accuracy. The chain is Small ribosomal subunit protein uS5 from Pyrococcus abyssi (strain GE5 / Orsay).